The chain runs to 86 residues: High affinity immunoglobulin epsilon receptor subunit gamma (86 aa).

Residues 1–18 (MYPAVVLLLLLLVEQAAA) form the signal peptide. Residues 19-23 (LGEPQ) are Extracellular-facing. Residues 24–44 (LCYILDAILFLYGIILTLLYC) form a helical membrane-spanning segment. Over 45-86 (RLKIQVRKATVASYEKPDGIYTGLSTRNQETYETLKHEKPPQ) the chain is Cytoplasmic. Residues 54 to 82 (TVASYEKPDGIYTGLSTRNQETYETLKHE) form the ITAM domain. Tyr-65 carries the post-translational modification Phosphotyrosine. Ser-69 is subject to Phosphoserine. Tyr-76 bears the Phosphotyrosine mark. Phosphothreonine is present on Thr-78.

Belongs to the CD3Z/FCER1G family. IgE Fc receptor is a tetramer of an alpha chain, a beta chain, and two disulfide linked gamma chains. Associates with FCGR1A; forms a functional signaling complex. The signaling subunit of immunoglobulin gamma (IgG) Fc receptor complex. As a homodimer or a heterodimer of CD247 and FCER1G, associates with the ligand binding subunit FCGR3A to form a functional receptor complex. Associates with CLEC6A. Interacts with CLEC4E. Interacts (via ITAM domain) with SYK (via SH2 domains); activates SYK, enabling integrin-mediated activation of neutrophils and macrophages. Interacts with CSF2RB and recruits SYK in response to IL3 stimulation; this interaction is direct. Interacts with CD300LH; the interaction may be indirect. Interacts with CD300LD. Interacts with TARM1.

Its subcellular location is the cell membrane. Functionally, adapter protein containing an immunoreceptor tyrosine-based activation motif (ITAM) that transduces activation signals from various immunoreceptors. As a component of the high-affinity immunoglobulin E (IgE) receptor, mediates allergic inflammatory signaling in mast cells. As a constitutive component of interleukin-3 receptor complex, selectively mediates interleukin 4/IL4 production by basophils priming T-cells toward effector T-helper 2 subset. Associates with pattern recognition receptors CLEC4D and CLEC4E to form a functional signaling complex in myeloid cells. Binding of mycobacterial trehalose 6,6'-dimycolate (TDM) to this receptor complex leads to phosphorylation of ITAM, triggering activation of SYK, CARD9 and NF-kappa-B, consequently driving maturation of antigen-presenting cells and shaping antigen-specific priming of T-cells toward effector T-helper 1 and T-helper 17 cell subtypes. May function cooperatively with other activating receptors. Functionally linked to integrin beta-2/ITGB2-mediated neutrophil activation. Also involved in integrin alpha-2/ITGA2-mediated platelet activation. This is High affinity immunoglobulin epsilon receptor subunit gamma (FCER1G) from Cavia porcellus (Guinea pig).